Here is a 202-residue protein sequence, read N- to C-terminus: Nucleoside triphosphate pyrophosphatase (202 aa).

Catalysis depends on Asp77, which acts as the Proton acceptor.

The protein belongs to the Maf family. A divalent metal cation is required as a cofactor.

The protein resides in the cytoplasm. It carries out the reaction a ribonucleoside 5'-triphosphate + H2O = a ribonucleoside 5'-phosphate + diphosphate + H(+). It catalyses the reaction a 2'-deoxyribonucleoside 5'-triphosphate + H2O = a 2'-deoxyribonucleoside 5'-phosphate + diphosphate + H(+). In terms of biological role, nucleoside triphosphate pyrophosphatase. May have a dual role in cell division arrest and in preventing the incorporation of modified nucleotides into cellular nucleic acids. This is Nucleoside triphosphate pyrophosphatase from Rickettsia canadensis (strain McKiel).